Consider the following 424-residue polypeptide: Histidine--tRNA ligase (424 aa).

The protein belongs to the class-II aminoacyl-tRNA synthetase family. In terms of assembly, homodimer.

It is found in the cytoplasm. The catalysed reaction is tRNA(His) + L-histidine + ATP = L-histidyl-tRNA(His) + AMP + diphosphate + H(+). The sequence is that of Histidine--tRNA ligase from Salmonella gallinarum (strain 287/91 / NCTC 13346).